A 127-amino-acid chain; its full sequence is Large ribosomal subunit protein bL20 (127 aa).

The protein belongs to the bacterial ribosomal protein bL20 family.

Functionally, binds directly to 23S ribosomal RNA and is necessary for the in vitro assembly process of the 50S ribosomal subunit. It is not involved in the protein synthesizing functions of that subunit. The sequence is that of Large ribosomal subunit protein bL20 from Corynebacterium jeikeium (strain K411).